An 89-amino-acid chain; its full sequence is Mapacalcine (89 aa).

A Glutamine amide modification is found at Q89.

In terms of assembly, homodimer. In terms of processing, contains disulfide bonds which may also be involved in dimerization.

Its function is as follows. Blocks calcium currents via interaction with a yet unknown target protein. Has no effect on L-type, T-type, N-type or P/Q-type voltage-gated calcium channels (VGCC). Has no effect on voltage-gated potassium or chloride channels. Blocks non-L-type VGCC calcium currents in mouse duodenal myocytes (IC(50)=0.2 uM). Blocks calcium influx induced by hypoxia/reoxygenation in rat hepatocytes. The chain is Mapacalcine from Pione vastifica (Boring sponge).